The following is a 201-amino-acid chain: Large ribosomal subunit protein uL4 (201 aa).

Positions 46-71 (QKTRAEITGSGKKPWRQKGTGRARSG) are disordered.

This sequence belongs to the universal ribosomal protein uL4 family. Part of the 50S ribosomal subunit.

Functionally, one of the primary rRNA binding proteins, this protein initially binds near the 5'-end of the 23S rRNA. It is important during the early stages of 50S assembly. It makes multiple contacts with different domains of the 23S rRNA in the assembled 50S subunit and ribosome. In terms of biological role, forms part of the polypeptide exit tunnel. This is Large ribosomal subunit protein uL4 from Klebsiella pneumoniae (strain 342).